The primary structure comprises 465 residues: 2-methylcitrate synthase, mitochondrial (465 aa).

The CoA site is built by Arg-72 and Lys-190. Oxaloacetate is bound at residue His-265. Leu-300 serves as a coordination point for CoA. Residue His-301 is part of the active site. Positions 342, 344, and 345 each coordinate CoA. The oxaloacetate site is built by His-347 and Arg-356. The active site involves His-347. CoA is bound by residues Thr-394, Lys-395, and Asn-400. Asp-402 is a catalytic residue. Residues Arg-428 and Arg-448 each contribute to the oxaloacetate site.

It belongs to the citrate synthase family. Homodimer.

The protein resides in the mitochondrion matrix. It carries out the reaction propanoyl-CoA + oxaloacetate + H2O = (2S,3S)-2-methylcitrate + CoA + H(+). The catalysed reaction is oxaloacetate + acetyl-CoA + H2O = citrate + CoA + H(+). It functions in the pathway organic acid metabolism; propanoate degradation. Its activity is regulated as follows. Activity is inhibited by p-chloromercuribenzoate (pCMB), monoiodoacetamide, H(2)O(2), ATP, ADP, NADH, NADPH, Hg(2+) and Zn(2+). Component of the methylcitrate cycle that catalyzes the synthesis of (2S,3S)-2-methylcitrate from propionyl-CoA and oxaloacetate. Plays an important role in detoxification of propionyl-CoA, an inhibitor of both primary and secondary metabolism. Also has citrate synthase activity using as substrates acetyl-CoA and oxaloacetate. The sequence is that of 2-methylcitrate synthase, mitochondrial from Yarrowia lipolytica (strain CLIB 122 / E 150) (Yeast).